The following is a 618-amino-acid chain: Acetolactate synthase (618 aa).

The disordered stretch occupies residues 1-30 (MSAPTKPHSPTFKPEPHSAANEPKHPAARP). E85 is a thiamine diphosphate binding site. FAD-binding positions include R187, 293-314 (HGTV…LGTR), and 336-355 (DIDP…IVGD). A thiamine pyrophosphate binding region spans residues 429 to 509 (QHQMWAAQFI…VKVALINNGN (81 aa)). The Mg(2+) site is built by D480 and N507.

Belongs to the TPP enzyme family. Mg(2+) is required as a cofactor. Requires thiamine diphosphate as cofactor.

It carries out the reaction 2 pyruvate + H(+) = (2S)-2-acetolactate + CO2. Its pathway is amino-acid biosynthesis; L-isoleucine biosynthesis; L-isoleucine from 2-oxobutanoate: step 1/4. It functions in the pathway amino-acid biosynthesis; L-valine biosynthesis; L-valine from pyruvate: step 1/4. The chain is Acetolactate synthase (ilvB) from Mycobacterium bovis (strain ATCC BAA-935 / AF2122/97).